The sequence spans 150 residues: Nucleoside diphosphate kinase (150 aa).

Lysine 9, phenylalanine 57, arginine 85, threonine 91, arginine 102, and asparagine 112 together coordinate ATP. The active-site Pros-phosphohistidine intermediate is the histidine 115.

This sequence belongs to the NDK family. As to quaternary structure, homotetramer. It depends on Mg(2+) as a cofactor.

It is found in the cytoplasm. It carries out the reaction a 2'-deoxyribonucleoside 5'-diphosphate + ATP = a 2'-deoxyribonucleoside 5'-triphosphate + ADP. It catalyses the reaction a ribonucleoside 5'-diphosphate + ATP = a ribonucleoside 5'-triphosphate + ADP. Major role in the synthesis of nucleoside triphosphates other than ATP. The ATP gamma phosphate is transferred to the NDP beta phosphate via a ping-pong mechanism, using a phosphorylated active-site intermediate. In Staphylococcus carnosus (strain TM300), this protein is Nucleoside diphosphate kinase.